A 291-amino-acid polypeptide reads, in one-letter code: Lys-63-specific deubiquitinase BRCC36-like (291 aa).

Residues 12–179 enclose the MPN domain; sequence VYLESDAFLV…YTCFQSVQAS (168 aa). Residues histidine 122, histidine 124, and aspartate 135 each contribute to the Zn(2+) site. A JAMM motif motif is present at residues 122–135; the sequence is HSHPHITVWPSHVD. The stretch at 259 to 286 forms a coiled coil; it reads LQWLEDRLEQNQQRLQELEQEKEDLMEE.

This sequence belongs to the peptidase M67A family. BRCC36 subfamily.

In terms of biological role, metalloprotease that specifically cleaves 'Lys-63'-linked polyubiquitin chains. The chain is Lys-63-specific deubiquitinase BRCC36-like from Mus musculus (Mouse).